We begin with the raw amino-acid sequence, 301 residues long: uncharacterized protein (301 aa).

A compositionally biased stretch (basic and acidic residues) spans 16 to 28; the sequence is EITEESEKTKTDL. Residues 16 to 38 form a disordered region; it reads EITEESEKTKTDLQKANTPNKTE. The segment covering 29 to 38 has biased composition (polar residues); sequence QKANTPNKTE. The 50-residue stretch at 252 to 301 folds into the G-patch domain; it reads KENVALKMLQRCGWKEGQGLGQHNQGIINPLHVEISGFVTETKHSKINDK.

This is an uncharacterized protein from Schizosaccharomyces pombe (strain 972 / ATCC 24843) (Fission yeast).